The chain runs to 105 residues: Malonate decarboxylase acyl carrier protein (105 aa).

Position 28 is an O-(phosphoribosyl dephospho-coenzyme A)serine (serine 28).

The protein belongs to the MdcC family. In terms of processing, covalently binds the prosthetic group of malonate decarboxylase.

It is found in the cytoplasm. Functionally, subunit of malonate decarboxylase, it is an acyl carrier protein to which acetyl and malonyl thioester residues are bound via a 2'-(5''-phosphoribosyl)-3'-dephospho-CoA prosthetic group and turn over during the catalytic mechanism. The protein is Malonate decarboxylase acyl carrier protein of Xanthomonas axonopodis pv. citri (strain 306).